The primary structure comprises 95 residues: Small ribosomal subunit protein bS20 (95 aa).

Belongs to the bacterial ribosomal protein bS20 family.

In terms of biological role, binds directly to 16S ribosomal RNA. The polypeptide is Small ribosomal subunit protein bS20 (Fervidobacterium nodosum (strain ATCC 35602 / DSM 5306 / Rt17-B1)).